A 771-amino-acid chain; its full sequence is Phosphoglycerate kinase (771 aa).

The interval 1–406 is phosphoglycerate kinase; sequence MKKLITDLNL…PGIDAIQNYE (406 aa). Residues 20 to 22, arginine 35, 58 to 61, arginine 118, and arginine 155 contribute to the substrate site; these read DLN and HLGR. ATP contacts are provided by residues lysine 206, glycine 295, glutamate 334, and 361 to 364; that span reads GGDS. The interval 407 to 771 is unknown; sequence QTYEQYDSQV…KRFWFFGRKR (365 aa).

In the N-terminal section; belongs to the phosphoglycerate kinase family. In terms of assembly, monomer.

It is found in the cytoplasm. It carries out the reaction (2R)-3-phosphoglycerate + ATP = (2R)-3-phospho-glyceroyl phosphate + ADP. It participates in carbohydrate degradation; glycolysis; pyruvate from D-glyceraldehyde 3-phosphate: step 2/5. In Mycoplasmopsis pulmonis (strain UAB CTIP) (Mycoplasma pulmonis), this protein is Phosphoglycerate kinase (pgk).